Here is a 338-residue protein sequence, read N- to C-terminus: Biotin synthase (338 aa).

Residues 45–272 enclose the Radical SAM core domain; it reads DEVQMSTLLS…QSVVRLSAGR (228 aa). Residues cysteine 60, cysteine 64, and cysteine 67 each coordinate [4Fe-4S] cluster. 4 residues coordinate [2Fe-2S] cluster: cysteine 104, cysteine 135, cysteine 195, and arginine 267.

This sequence belongs to the radical SAM superfamily. Biotin synthase family. As to quaternary structure, homodimer. [4Fe-4S] cluster is required as a cofactor. Requires [2Fe-2S] cluster as cofactor.

The catalysed reaction is (4R,5S)-dethiobiotin + (sulfur carrier)-SH + 2 reduced [2Fe-2S]-[ferredoxin] + 2 S-adenosyl-L-methionine = (sulfur carrier)-H + biotin + 2 5'-deoxyadenosine + 2 L-methionine + 2 oxidized [2Fe-2S]-[ferredoxin]. It participates in cofactor biosynthesis; biotin biosynthesis; biotin from 7,8-diaminononanoate: step 2/2. Functionally, catalyzes the conversion of dethiobiotin (DTB) to biotin by the insertion of a sulfur atom into dethiobiotin via a radical-based mechanism. The chain is Biotin synthase from Parvibaculum lavamentivorans (strain DS-1 / DSM 13023 / NCIMB 13966).